We begin with the raw amino-acid sequence, 364 residues long: Biotin synthase (364 aa).

The 236-residue stretch at 68–303 (CCGNTVDLCS…QQILRYAGGR (236 aa)) folds into the Radical SAM core domain. The [4Fe-4S] cluster site is built by Cys-86, Cys-90, and Cys-93. Positions 131, 168, 228, and 298 each coordinate [2Fe-2S] cluster.

This sequence belongs to the radical SAM superfamily. Biotin synthase family. As to quaternary structure, homodimer. [4Fe-4S] cluster serves as cofactor. It depends on [2Fe-2S] cluster as a cofactor.

The catalysed reaction is (4R,5S)-dethiobiotin + (sulfur carrier)-SH + 2 reduced [2Fe-2S]-[ferredoxin] + 2 S-adenosyl-L-methionine = (sulfur carrier)-H + biotin + 2 5'-deoxyadenosine + 2 L-methionine + 2 oxidized [2Fe-2S]-[ferredoxin]. It functions in the pathway cofactor biosynthesis; biotin biosynthesis; biotin from 7,8-diaminononanoate: step 2/2. Catalyzes the conversion of dethiobiotin (DTB) to biotin by the insertion of a sulfur atom into dethiobiotin via a radical-based mechanism. The sequence is that of Biotin synthase from Microcystis aeruginosa (strain NIES-843 / IAM M-2473).